A 172-amino-acid chain; its full sequence is DCC family protein At1g52590, chloroplastic (172 aa).

A chloroplast-targeting transit peptide spans 1–25 (MAILIPASFGRLTITSRAQVRVRVS).

This sequence belongs to the DCC thiol-disulfide oxidoreductase family.

It localises to the plastid. Its subcellular location is the chloroplast. In Arabidopsis thaliana (Mouse-ear cress), this protein is DCC family protein At1g52590, chloroplastic.